A 468-amino-acid polypeptide reads, in one-letter code: ATP synthase subunit beta (468 aa).

155–162 (GGAGVGKT) is an ATP binding site.

This sequence belongs to the ATPase alpha/beta chains family. In terms of assembly, F-type ATPases have 2 components, CF(1) - the catalytic core - and CF(0) - the membrane proton channel. CF(1) has five subunits: alpha(3), beta(3), gamma(1), delta(1), epsilon(1). CF(0) has three main subunits: a(1), b(2) and c(9-12). The alpha and beta chains form an alternating ring which encloses part of the gamma chain. CF(1) is attached to CF(0) by a central stalk formed by the gamma and epsilon chains, while a peripheral stalk is formed by the delta and b chains.

It localises to the cell membrane. The catalysed reaction is ATP + H2O + 4 H(+)(in) = ADP + phosphate + 5 H(+)(out). In terms of biological role, produces ATP from ADP in the presence of a proton gradient across the membrane. The catalytic sites are hosted primarily by the beta subunits. This chain is ATP synthase subunit beta, found in Streptococcus thermophilus (strain CNRZ 1066).